The primary structure comprises 213 residues: Protein brother (213 aa).

A disordered region spans residues His-189 to Trp-213. Residues Gly-203 to Trp-213 are compositionally biased toward gly residues.

This sequence belongs to the CBF-beta family.

The protein resides in the nucleus. In terms of biological role, regulates the DNA-binding properties of Runt. This is Protein brother (Bro) from Drosophila melanogaster (Fruit fly).